The sequence spans 928 residues: DNA polymerase I (928 aa).

The 323-residue stretch at 1–323 (MVQIPENPLI…IDESPSEPAA (323 aa)) folds into the 5'-3' exonuclease domain. A 3'-5' exonuclease domain is found at 324–517 (ALSYENYVTI…LHLKMWPELQ (194 aa)). A klenow fragment region spans residues 324-928 (ALSYENYVTI…GSGENWDQAH (605 aa)). Residues 521 to 928 (GPLNVFENIE…GSGENWDQAH (408 aa)) are polymerase.

This sequence belongs to the DNA polymerase type-A family. Single-chain monomer with multiple functions.

It carries out the reaction DNA(n) + a 2'-deoxyribonucleoside 5'-triphosphate = DNA(n+1) + diphosphate. Functionally, in addition to polymerase activity, this DNA polymerase exhibits 3'-5' and 5'-3' exonuclease activity. It is able to utilize nicked circular duplex DNA as a template and can unwind the parental DNA strand from its template. This chain is DNA polymerase I (polA), found in Salmonella typhimurium (strain LT2 / SGSC1412 / ATCC 700720).